A 558-amino-acid chain; its full sequence is Atlastin-1 (558 aa).

Positions 1 to 29 are disordered; that stretch reads MAKSRRDRNSWGGFSEKSSDWSSEEEEPV. Positions 1 to 34 are N-terminal hypervariable region (HVR); it reads MAKSRRDRNSWGGFSEKSSDWSSEEEEPVRKAGP. At 1 to 449 the chain is on the cytoplasmic side; sequence MAKSRRDRNS…NIFHAARTPA (449 aa). A phosphoserine mark is found at serine 10, serine 22, and serine 23. A GB1/RHD3-type G domain is found at 64-309; sequence DKEVVAVSVA…LIPWLLSPES (246 aa). Residues arginine 77, lysine 78, glycine 79, lysine 80, serine 81, phenylalanine 82, glutamine 148, arginine 217, aspartate 218, valine 276, and asparagine 279 each contribute to the GDP site. GTP is bound by residues arginine 77, lysine 78, glycine 79, lysine 80, serine 81, and phenylalanine 82. Serine 81 contributes to the Mg(2+) binding site. Positions 217, 218, and 276 each coordinate GTP. The 3HB (three-helix bundle) domain stretch occupies residues 347–438; it reads MLQATAEANN…YIQYIKHNDS (92 aa). The residue at position 395 (lysine 395) is an N6-acetyllysine. Positions 412–439 form a coiled coil; the sequence is EFSRRYLQQLESEIDELYIQYIKHNDSK. The linker stretch occupies residues 439-447; the sequence is KNIFHAART. The chain crosses the membrane as a helical span at residues 450 to 470; the sequence is TLFVVIFITYVIAGVTGFIGL. Aspartate 471 is a topological domain (lumenal). A helical transmembrane segment spans residues 472-492; that stretch reads IIASLCNMIMGLTLITLCTWA. Residues 493–558 lie on the Cytoplasmic side of the membrane; the sequence is YIRYSGEYRE…PTEQPEKKKI (66 aa). The tract at residues 521–558 is autoinhibitory domain; that stretch reads NEALYKLYSAAATHRHLYQQAFPAPKSEPTEQPEKKKI.

This sequence belongs to the TRAFAC class dynamin-like GTPase superfamily. GB1/RHD3 GTPase family. GB1 subfamily. In terms of assembly, monomeric and homodimeric. The homodimer, transiently formed by two molecules on opposing membranes, is the active form mediating ER membrane fusion. Interacts with REEP1, REEP5, RTN3 and RTN4 (via the transmembrane region); these proteins are involved in endoplasmic reticulum tubular network organization. Interacts with ZFYVE27; both proteins are involved in endoplasmic reticulum tubular network organization. Interacts with ARL6IP1; both proteins are involved in endoplasmic reticulum tubular network organization. Interacts with SPAST; the interaction is direct, could recruit SPAST to Golgi membranes. Interacts (via N-terminal region) with MAP4K4 (via CNH regulatory domain). May interact with TMED2. Interacts with CPT1C. Phosphorylated. Phosphorylation, by different kinases, of the N-terminal hypervariable region (HVR) regulates the ATL1-mediated membrane tethering step. As to expression, detected in brain where it is abundant in lamina V of the cerebral cortex. Also expressed within the hippocampus, mainly in pyramidal neurons in CA1 and CA3. Weakly expressed in the striatum and more robustly in amygdala and several thalamic nuclei. Also detected in several mesopontine nuclei (at protein level).

It localises to the endoplasmic reticulum membrane. The protein resides in the golgi apparatus membrane. The protein localises to the cell projection. Its subcellular location is the axon. The catalysed reaction is GTP + H2O = GDP + phosphate + H(+). Its function is as follows. Atlastin-1 (ATL1) is a membrane-anchored GTPase that mediates the GTP-dependent fusion of endoplasmic reticulum (ER) membranes, maintaining the continuous ER network. It facilitates the formation of three-way junctions where ER tubules intersect. Two atlastin-1 on neighboring ER tubules bind GTP and form loose homodimers through the GB1/RHD3-type G domains and 3HB regions. Upon GTP hydrolysis, the 3HB regions tighten, pulling the membranes together to drive their fusion. After fusion, the homodimer disassembles upon release of inorganic phosphate (Pi). Subsequently, GDP dissociates, resetting the monomers to a conformation ready for a new fusion cycle. May also regulate more or less directly Golgi biogenesis. Indirectly regulates axonal development. In Rattus norvegicus (Rat), this protein is Atlastin-1.